The primary structure comprises 232 residues: 2,3-bisphosphoglycerate-dependent phosphoglycerate mutase (232 aa).

Residues 10 to 17, 23 to 24, R62, 89 to 92, K100, 116 to 117, and 185 to 186 contribute to the substrate site; these read RHGESQWN, TG, ERHY, RR, and GN. The active-site Tele-phosphohistidine intermediate is H11. E89 acts as the Proton donor/acceptor in catalysis.

The protein belongs to the phosphoglycerate mutase family. BPG-dependent PGAM subfamily. Homodimer.

It carries out the reaction (2R)-2-phosphoglycerate = (2R)-3-phosphoglycerate. It participates in carbohydrate degradation; glycolysis; pyruvate from D-glyceraldehyde 3-phosphate: step 3/5. In terms of biological role, catalyzes the interconversion of 2-phosphoglycerate and 3-phosphoglycerate. This is 2,3-bisphosphoglycerate-dependent phosphoglycerate mutase from Blochmanniella floridana.